The chain runs to 93 residues: Small ribosomal subunit protein uS19 (93 aa).

The protein belongs to the universal ribosomal protein uS19 family.

Its function is as follows. Protein S19 forms a complex with S13 that binds strongly to the 16S ribosomal RNA. The polypeptide is Small ribosomal subunit protein uS19 (Arthrobacter sp. (strain FB24)).